Here is a 400-residue protein sequence, read N- to C-terminus: MMNIHSVKGQKIAAGERTQEVDHPHSLVAQFGADQPLPLDCGIELSPFQIAYQTYGTLNADKSNAILVCHALTMDQHIANVHPITGKPGGWLTLVGPGKPIDTDRYFVICSNVIGGCMGSTGPASINPATGKAWGLDFPVITIPDMVRAQAMLIDRFGIDKLFCVVGGSMGGMQVLQWSVAFPERVFSALAIACATRHSAQNIAFHELGRQAVMADPDWQHGRYFEHGCFPHRGLAVARMAAHITYLSDAALHRKFGRKMQDRELPTFSFDADFQVESYLRYQGSSFVERFDANSYLYLTRAMDYFDIAADHDGVLAAAFRGTQTRFCVVSFTSDWLFPTSESRAIVHALNAGGARVSFAEIVTDKGHDAFLLDEPEFIDIARAFLQSAGTARGLGKAEH.

The AB hydrolase-1 domain occupies N64–D374. S169 functions as the Nucleophile in the catalytic mechanism. Residue R239 participates in substrate binding. Active-site residues include D335 and H368. D369 provides a ligand contact to substrate.

The protein belongs to the AB hydrolase superfamily. MetX family. In terms of assembly, homodimer.

Its subcellular location is the cytoplasm. It catalyses the reaction L-homoserine + acetyl-CoA = O-acetyl-L-homoserine + CoA. It functions in the pathway amino-acid biosynthesis; L-methionine biosynthesis via de novo pathway; O-acetyl-L-homoserine from L-homoserine: step 1/1. Its function is as follows. Transfers an acetyl group from acetyl-CoA to L-homoserine, forming acetyl-L-homoserine. This is Homoserine O-acetyltransferase from Rhodopseudomonas palustris (strain ATCC BAA-98 / CGA009).